Reading from the N-terminus, the 158-residue chain is Osmosensory protein A (158 aa).

Thr2 carries the post-translational modification Phosphothreonine; by PknD. The region spanning 28–139 is the STAS domain; that stretch reads AQIRAYLHHL…RSVHKALHDL (112 aa).

The protein belongs to the anti-sigma-factor antagonist family. In terms of assembly, interacts with Rv2638. Phosphorylation abolishes binding to Rv2638. Phosphorylated on Thr-2 by the serine/threonine-protein kinase PknD. Also phosphorylated to a lesser extent by PknB and PknE. Dephosphorylated by PstP.

With respect to regulation, regulated by PknD under osmotic stress. Functionally, part of a signaling pathway that enables adaptation to osmotic stress through cell wall remodeling and virulence factor production. Unphosphorylated OprA forms a complex with the anti-anti-sigma-factor paralog Rv2638 that dissociates on OprA phosphorylation by PknD. Phosphorylation of OprA may stimulate the release of SigF from an inhibitory complex and enable the transcription of osmotically regulated genes, such as oprA and the ESX-1-associated virulence factor espA. This chain is Osmosensory protein A, found in Mycobacterium tuberculosis (strain ATCC 25618 / H37Rv).